Here is a 1274-residue protein sequence, read N- to C-terminus: Myosin-1 (1274 aa).

A disordered region spans residues 1-28; that stretch reads MAPSKKAGKKGAVGGFLSGASKPQKVQK. In terms of domain architecture, Myosin motor spans 41–721; that stretch reads AGVPDMTLLS…TLFYLEGERD (681 aa). An ATP-binding site is contributed by 134–141; that stretch reads GESGAGKT. S363 is modified (phosphoserine). The tract at residues 410–492 is actin-binding; the sequence is VIGVLDIYGF…AGIFATLNDA (83 aa). IQ domains are found at residues 725–745 and 746–771; these read HTMA…KHEA and ATKI…YGHQ. One can recognise a TH1 domain in the interval 779–969; the sequence is RRRFSLLGMR…TIQVGSGEPP (191 aa). Disordered stretches follow at residues 951 to 1029, 1042 to 1071, and 1116 to 1248; these read RGDA…PVVT, ARAP…PKEF, and PSNY…QVAQ. Over residues 957–974 the composition is skewed to polar residues; that stretch reads KSHTIQVGSGEPPNSLSN. The span at 1042–1053 shows a compositional bias: low complexity; the sequence is ARAPPSIPGRAA. Pro residues-rich tracts occupy residues 1054 to 1067 and 1126 to 1138; these read APPP…PAGP and APPP…PPSR. An SH3 domain is found at 1067–1125; the sequence is PPKEFYKALYNFTGQEGEMNLVKGEEVEVKEKDDNGWWMVVKNGQEGWAPSNYLKKVEQ. Low complexity-rich tracts occupy residues 1139–1157 and 1170–1226; these read PVAA…PAVT and AASA…IGGK.

Belongs to the TRAFAC class myosin-kinesin ATPase superfamily. Myosin family. In terms of processing, phosphorylation of the TEDS site (Ser-363) is required for the polarization of the actin cytoskeleton. Phosphorylation probably activates the myosin-I ATPase activity.

Its subcellular location is the cytoplasm. The protein localises to the cytoskeleton. The protein resides in the actin patch. In terms of biological role, type-I myosin implicated in the organization of the actin cytoskeleton. Required for proper actin cytoskeleton polarization. At the cell cortex, assembles in patch-like structures together with proteins from the actin-polymerizing machinery and promotes actin assembly. Functions as actin nucleation-promoting factor (NPF) for the Arp2/3 complex. In Cryptococcus neoformans var. neoformans serotype D (strain B-3501A) (Filobasidiella neoformans), this protein is Myosin-1 (MYO1).